The chain runs to 1933 residues: Protein TIC 214 (1933 aa).

6 consecutive transmembrane segments (helical) span residues 18–38 (IVNS…FSIG), 60–80 (ATTG…YAPL), 87–107 (PHTI…FYTD), 128–148 (FSIQ…HFIL), 176–196 (VGWL…LVWI), and 230–250 (IFYI…PAPL). Disordered stretches follow at residues 266–291 (AKGK…VGVG), 473–514 (KTKS…SRDN), 808–832 (THRE…AEDP), and 1066–1121 (ESFT…SSNA). Acidic residues predominate over residues 278-289 (EEGDVEKEDEVG). Residues 476–487 (SLSPEKTSGDNL) show a composition bias toward polar residues. Basic and acidic residues-rich tracts occupy residues 488 to 514 (ETSR…SRDN) and 819 to 832 (DEKN…AEDP). A compositionally biased stretch (polar residues) spans 1066–1078 (ESFTQISSPSSTN). Over residues 1105 to 1115 (KEKKKKKRSLK) the composition is skewed to basic residues. A helical membrane pass occupies residues 1135–1155 (LPVYLKLFIQRIYTGIFFSII). The segment at 1562–1642 (NADNEKNEKK…SAESTTKKVT (81 aa)) is disordered. Residues 1564-1642 (DNEKNEKKEA…SAESTTKKVT (79 aa)) show a composition bias toward basic and acidic residues.

Belongs to the TIC214 family. In terms of assembly, part of the Tic complex.

It localises to the plastid. The protein resides in the chloroplast inner membrane. Involved in protein precursor import into chloroplasts. May be part of an intermediate translocation complex acting as a protein-conducting channel at the inner envelope. This is Protein TIC 214 from Jasminum nudiflorum (Winter jasmine).